Here is a 121-residue protein sequence, read N- to C-terminus: Protransforming growth factor alpha (121 aa).

Leucine 1 is a signal peptide. The propeptide at 2–16 (ENSTSLLSDPPVAAA) is removed in mature form. Topologically, residues 2-75 (ENSTSLLSDP…AVVAASQKKQ (74 aa)) are extracellular. Asparagine 3 carries N-linked (GlcNAc...) asparagine glycosylation. Positions 20–60 (HFNDCPDSHTQFCFHGTCRFLVQEDRPACVCHSGYVGARCE) constitute an EGF-like domain. Intrachain disulfides connect cysteine 24–cysteine 37, cysteine 32–cysteine 48, and cysteine 50–cysteine 59. Positions 67–121 (VVAASQKKQAITALVVVSIVALAVLIITCVLIHCCQVRKHCEWCRALICRHEKPS) are cleaved as a propeptide — removed in mature form. A helical membrane pass occupies residues 76–101 (AITALVVVSIVALAVLIITCVLIHCC).

Interacts with the PDZ domains of MAGI3, SDCBP and SNTA1. The interaction with SDCBP, is required for the targeting to the cell surface. In the endoplasmic reticulum, in its immature form (i.e. with a prosegment and lacking full N-glycosylation), interacts with CNIH. In the Golgi apparatus, may form a complex with CNIH and GORASP2. Interacts (via cytoplasmic C-terminal domain) with NKD2. As to expression, hypothalamus.

The protein localises to the secreted. Its subcellular location is the extracellular space. The protein resides in the cell membrane. Its function is as follows. TGF alpha is a mitogenic polypeptide that is able to bind to the EGF receptor/EGFR and to act synergistically with TGF beta to promote anchorage-independent cell proliferation in soft agar. The chain is Protransforming growth factor alpha (TGFA) from Macaca mulatta (Rhesus macaque).